Consider the following 367-residue polypeptide: 4-hydroxy-3-methylbut-2-en-1-yl diphosphate synthase (flavodoxin) (367 aa).

The [4Fe-4S] cluster site is built by Cys268, Cys271, Cys303, and Glu310.

This sequence belongs to the IspG family. Requires [4Fe-4S] cluster as cofactor.

It catalyses the reaction (2E)-4-hydroxy-3-methylbut-2-enyl diphosphate + oxidized [flavodoxin] + H2O + 2 H(+) = 2-C-methyl-D-erythritol 2,4-cyclic diphosphate + reduced [flavodoxin]. It participates in isoprenoid biosynthesis; isopentenyl diphosphate biosynthesis via DXP pathway; isopentenyl diphosphate from 1-deoxy-D-xylulose 5-phosphate: step 5/6. In terms of biological role, converts 2C-methyl-D-erythritol 2,4-cyclodiphosphate (ME-2,4cPP) into 1-hydroxy-2-methyl-2-(E)-butenyl 4-diphosphate. The polypeptide is 4-hydroxy-3-methylbut-2-en-1-yl diphosphate synthase (flavodoxin) (Halalkalibacterium halodurans (strain ATCC BAA-125 / DSM 18197 / FERM 7344 / JCM 9153 / C-125) (Bacillus halodurans)).